We begin with the raw amino-acid sequence, 513 residues long: GMP synthase [glutamine-hydrolyzing] (513 aa).

Residues 3-192 (TVVVLDYGSQ…VSKVAKMEKN (190 aa)) form the Glutamine amidotransferase type-1 domain. Cysteine 80 acts as the Nucleophile in catalysis. Active-site residues include histidine 166 and glutamate 168. In terms of domain architecture, GMPS ATP-PPase spans 193-388 (WKMTDFIEEK…LGLPDEMINR (196 aa)). 220–226 (SGGVDSS) is a binding site for ATP.

Homodimer.

The catalysed reaction is XMP + L-glutamine + ATP + H2O = GMP + L-glutamate + AMP + diphosphate + 2 H(+). The protein operates within purine metabolism; GMP biosynthesis; GMP from XMP (L-Gln route): step 1/1. Its function is as follows. Catalyzes the synthesis of GMP from XMP. In Thermosipho africanus (strain TCF52B), this protein is GMP synthase [glutamine-hydrolyzing].